The primary structure comprises 550 residues: Hydroxylamine reductase (550 aa).

4 residues coordinate [4Fe-4S] cluster: cysteine 5, cysteine 8, cysteine 17, and cysteine 23. The hybrid [4Fe-2O-2S] cluster site is built by histidine 250, glutamate 274, cysteine 319, cysteine 405, cysteine 433, cysteine 458, glutamate 492, and lysine 494. Position 405 is a cysteine persulfide (cysteine 405).

Belongs to the HCP family. [4Fe-4S] cluster is required as a cofactor. Requires hybrid [4Fe-2O-2S] cluster as cofactor.

It localises to the cytoplasm. It carries out the reaction A + NH4(+) + H2O = hydroxylamine + AH2 + H(+). Functionally, catalyzes the reduction of hydroxylamine to form NH(3) and H(2)O. This chain is Hydroxylamine reductase, found in Geobacter sulfurreducens (strain ATCC 51573 / DSM 12127 / PCA).